Reading from the N-terminus, the 977-residue chain is Collagen alpha-2(I) chain (977 aa).

The disordered stretch occupies residues 1-977 (SGGFDFSFLP…RGSQGSQGPS (977 aa)). Residues proline 10, proline 13, proline 28, and proline 34 each carry the 4-hydroxyproline modification. A compositionally biased stretch (low complexity) spans 17–66 (GPMGLMGPRGPPGASGAPGPQGFQGPAGEPGEPGQTGPAGARGPAGPPGK). A 5-hydroxylysine; alternate modification is found at lysine 91. O-linked (Gal...) hydroxylysine; alternate glycosylation occurs at lysine 91. Low complexity-rich tracts occupy residues 138–159 (SRGS…SAGP) and 205–226 (PGAN…AGAP). Gly residues predominate over residues 258–267 (GESGGKGEPG). The span at 268–278 (SAGPQGPPGSS) shows a compositional bias: low complexity. The span at 300–309 (GLRGGPGSRG) shows a compositional bias: gly residues. Over residues 322-338 (PAGARGASGPAGVRGPS) the composition is skewed to low complexity. 4-hydroxyproline occurs at positions 344 and 347. The span at 373 to 392 (LPGIDGRPGPIGPAGARGEA) shows a compositional bias: low complexity. Residues 441–450 (GVQGGKGEQG) are compositionally biased toward gly residues. Low complexity-rich tracts occupy residues 497-514 (SGES…SRGP) and 526-536 (EPGVVGAPGTA). The segment covering 537-546 (GPAGSGGLPG) has biased composition (gly residues). 2 stretches are compositionally biased toward low complexity: residues 569-605 (VGTT…AGPA) and 620-640 (VGPA…QPGA). Residues 641–650 (KGERGTKGPK) are compositionally biased toward basic and acidic residues. Residues 658–668 (PTGPVGSAGPA) are compositionally biased toward low complexity. Positions 678–687 (GSRGDGGPPG) are enriched in gly residues. Positions 689–698 (TGFPGAAGRT) are enriched in low complexity. The segment covering 735–744 (GETGAGGPPG) has biased composition (gly residues). Low complexity-rich tracts occupy residues 752–779 (SGEP…LGLP) and 787–797 (LPGVAGAVGEP). Positions 798-817 (GPLGIGPPGARGPSGAGVNG) are enriched in gly residues. Composition is skewed to low complexity over residues 853–871 (PVGA…PAGK) and 878–898 (PGPA…PSGP). The segment covering 902 to 913 (RGDKGEAGDKGP) has biased composition (basic and acidic residues).

This sequence belongs to the fibrillar collagen family. Trimers of one alpha 2(I) and two alpha 1(I) chains. Interacts (via C-terminus) with TMEM131 (via PapD-L domain); the interaction is direct and is involved in assembly and TRAPPIII ER-to-Golgi transport complex-dependent secretion of collagen. In terms of processing, prolines at the third position of the tripeptide repeating unit (G-X-Y) are hydroxylated in some or all of the chains. Expressed in bones.

The protein resides in the secreted. It localises to the extracellular space. The protein localises to the extracellular matrix. In terms of biological role, type I collagen is a member of group I collagen (fibrillar forming collagen). In Scelidodon sp. (strain SLP-2019) (South American ground sloth), this protein is Collagen alpha-2(I) chain.